A 342-amino-acid polypeptide reads, in one-letter code: Antihemorrhagic factor HSF (342 aa).

Positions 1-19 (MNSLVALVLLGQIIGSTLS) are cleaved as a signal peptide. 2 consecutive Cystatin fetuin-A-type domains span residues 22–130 (VRGD…VKCH) and 141–254 (RNCS…SNCV). A Cell attachment site motif is present at residues 23 to 25 (RGD). The segment at 24 to 108 (GDLECDDKEA…RQQHNHAVEM (85 aa)) is indispensable for metalloproteinase inhibition. 6 disulfide bridges follow: cysteine 28/cysteine 332, cysteine 85/cysteine 96, cysteine 110/cysteine 129, cysteine 143/cysteine 146, cysteine 205/cysteine 217, and cysteine 230/cysteine 253. Residue asparagine 142 is glycosylated (N-linked (GlcNAc...) asparagine). An N-linked (GlcNAc...) asparagine glycan is attached at asparagine 204. Asparagine 282 carries N-linked (GlcNAc...) asparagine glycosylation.

This sequence belongs to the fetuin family. In terms of processing, cys-63 may exist in a mixed disulfide form with a thiol compound such as glutathione. Expressed by the liver.

It localises to the secreted. Functionally, inhibits hemorrhagic and proteolytic activities of metalloproteinases (HR1A, HR1B, HR2a, HR2b and H2 proteinase from T.flavodidis and brevilysins H3, H4, H6 and L4 from A.halys brevicaudus). Has no effect on brevilysins H2. Has no effect on papain and cathepsin-B. This chain is Antihemorrhagic factor HSF, found in Protobothrops flavoviridis (Habu).